The following is a 152-amino-acid chain: Endoribonuclease YbeY (152 aa).

Positions 118, 122, and 128 each coordinate Zn(2+).

The protein belongs to the endoribonuclease YbeY family. Zn(2+) is required as a cofactor.

It localises to the cytoplasm. Its function is as follows. Single strand-specific metallo-endoribonuclease involved in late-stage 70S ribosome quality control and in maturation of the 3' terminus of the 16S rRNA. The protein is Endoribonuclease YbeY of Pelotomaculum thermopropionicum (strain DSM 13744 / JCM 10971 / SI).